Consider the following 197-residue polypeptide: Nucleoid occlusion factor SlmA (197 aa).

The HTH tetR-type domain maps to 7 to 67; it reads INRREHILQC…GLIEFIEESL (61 aa). Residues 30-49 constitute a DNA-binding region (H-T-H motif); it reads TTAKLASEVGVSEAALYRHF.

It belongs to the nucleoid occlusion factor SlmA family. In terms of assembly, homodimer. Interacts with FtsZ.

It localises to the cytoplasm. The protein localises to the nucleoid. Required for nucleoid occlusion (NO) phenomenon, which prevents Z-ring formation and cell division over the nucleoid. Acts as a DNA-associated cell division inhibitor that binds simultaneously chromosomal DNA and FtsZ, and disrupts the assembly of FtsZ polymers. SlmA-DNA-binding sequences (SBS) are dispersed on non-Ter regions of the chromosome, preventing FtsZ polymerization at these regions. In Shewanella sp. (strain MR-7), this protein is Nucleoid occlusion factor SlmA.